Reading from the N-terminus, the 560-residue chain is Dihydroxy-acid dehydratase (560 aa).

C52 is a binding site for [2Fe-2S] cluster. D84 is a Mg(2+) binding site. C125 provides a ligand contact to [2Fe-2S] cluster. D126 and K127 together coordinate Mg(2+). K127 is subject to N6-carboxylysine. C197 contributes to the [2Fe-2S] cluster binding site. Residue E449 coordinates Mg(2+). S475 (proton acceptor) is an active-site residue.

It belongs to the IlvD/Edd family. In terms of assembly, homodimer. Requires [2Fe-2S] cluster as cofactor. The cofactor is Mg(2+).

The catalysed reaction is (2R)-2,3-dihydroxy-3-methylbutanoate = 3-methyl-2-oxobutanoate + H2O. It catalyses the reaction (2R,3R)-2,3-dihydroxy-3-methylpentanoate = (S)-3-methyl-2-oxopentanoate + H2O. It participates in amino-acid biosynthesis; L-isoleucine biosynthesis; L-isoleucine from 2-oxobutanoate: step 3/4. It functions in the pathway amino-acid biosynthesis; L-valine biosynthesis; L-valine from pyruvate: step 3/4. Functionally, functions in the biosynthesis of branched-chain amino acids. Catalyzes the dehydration of (2R,3R)-2,3-dihydroxy-3-methylpentanoate (2,3-dihydroxy-3-methylvalerate) into 2-oxo-3-methylpentanoate (2-oxo-3-methylvalerate) and of (2R)-2,3-dihydroxy-3-methylbutanoate (2,3-dihydroxyisovalerate) into 2-oxo-3-methylbutanoate (2-oxoisovalerate), the penultimate precursor to L-isoleucine and L-valine, respectively. The protein is Dihydroxy-acid dehydratase of Sulfurisphaera tokodaii (strain DSM 16993 / JCM 10545 / NBRC 100140 / 7) (Sulfolobus tokodaii).